The chain runs to 136 residues: Protein PsiE homolog (136 aa).

Helical transmembrane passes span 15-35 (ILQT…VVFL), 55-75 (YELV…ALIV), 82-102 (FHFP…RLII), and 108-128 (PLDV…LWLC).

Belongs to the PsiE family.

The protein resides in the cell inner membrane. The chain is Protein PsiE homolog from Enterobacter sp. (strain 638).